Reading from the N-terminus, the 312-residue chain is Ribosomal protein L11 methyltransferase (312 aa).

The S-adenosyl-L-methionine site is built by threonine 162, glycine 183, aspartate 205, and asparagine 248.

Belongs to the methyltransferase superfamily. PrmA family.

The protein resides in the cytoplasm. It carries out the reaction L-lysyl-[protein] + 3 S-adenosyl-L-methionine = N(6),N(6),N(6)-trimethyl-L-lysyl-[protein] + 3 S-adenosyl-L-homocysteine + 3 H(+). Methylates ribosomal protein L11. This is Ribosomal protein L11 methyltransferase from Anoxybacillus flavithermus (strain DSM 21510 / WK1).